The primary structure comprises 317 residues: MNQSPPGIIFNIQRFTIHDGPGLRTELFLKGCPLRCEWCSNPESFMPYAQVGVYKTKCISYKKCAACEETCPQENILQFTRGKLTSIERHDCTNCLACHNACPSDAIKLWGKSMSVEECMEEIRKDKGYYERSGGGVTVSGGEPLLQSEFVAKLFQACRSEGIQTCLESSLYVPWKKVQNVLPYTDLIISDIKHMDPEIHKKYTKVSNDKILKNLIKLTAEKRNIILRIPVIPNVNDDMVNIESTADFILNELGGKIRTLQLLSFMRLGEEKYTALGLPYKMKNVKVNRRSFQKHIQMLAEYFNQRGIHCVVGTKEK.

Residues 18-306 (HDGPGLRTEL…QMLAEYFNQR (289 aa)) form the Radical SAM core domain. Positions 32, 36, 39, 58, 64, 67, 71, 92, 95, 98, and 102 each coordinate [4Fe-4S] cluster. 38–40 (WCS) lines the S-adenosyl-L-methionine pocket. 2 4Fe-4S ferredoxin-type domains span residues 49–82 (AQVG…FTRG) and 83–112 (KLTS…LWGK). Residues Gly142 and 191–193 (DIK) contribute to the S-adenosyl-L-methionine site.

It belongs to the organic radical-activating enzymes family. [4Fe-4S] cluster is required as a cofactor.

The enzyme catalyses glycyl-[protein] + reduced [flavodoxin] + S-adenosyl-L-methionine = glycin-2-yl radical-[protein] + semiquinone [flavodoxin] + 5'-deoxyadenosine + L-methionine + H(+). It participates in organosulfur degradation; alkanesulfonate degradation. Involved in the degradation of the organosulfur compound 2(S)-dihydroxypropanesulfonate (DHPS). Catalyzes activation of the (2S)-3-sulfopropanediol dehydratase HpfG under anaerobic conditions by generation of an organic free radical on a glycine residue. This Klebsiella oxytoca protein is (2S)-3-sulfopropanediol dehydratase activating enzyme.